The following is a 161-amino-acid chain: uncharacterized protein (161 aa).

2 disordered regions span residues 47-83 and 104-137; these read KPAK…NNIN and RRLQ…SKNY. Residues 50-64 show a composition bias toward basic residues; the sequence is KRNIHGHNNHTRSSN. Composition is skewed to low complexity over residues 73–83 and 115–130; these read NINHNNNNNIN and SSSS…TNDN.

This is an uncharacterized protein from Dictyostelium discoideum (Social amoeba).